The chain runs to 67 residues: MPKLKTRRAAAKRFKLTGSGKKIARRKAFKNHLLNHKSAEQKRRRLSGMALVDKSDEKNVRLMLPYA.

This sequence belongs to the bacterial ribosomal protein bL35 family.

The polypeptide is Large ribosomal subunit protein bL35 (Picosynechococcus sp. (strain ATCC 27264 / PCC 7002 / PR-6) (Agmenellum quadruplicatum)).